The following is a 714-amino-acid chain: T-cell activation Rho GTPase-activating protein (714 aa).

A Rho-GAP domain is found at 88 to 277 (QPLSIICGEN…FLIDNCFEIF (190 aa)). Disordered regions lie at residues 290 to 357 (DDSL…ESSV), 370 to 419 (QDRR…AEDP), 451 to 508 (QGHI…HSMS), 520 to 563 (RTSS…QSQT), and 623 to 650 (KPST…HRLS). A compositionally biased stretch (polar residues) spans 299–311 (SDVSTLQNDSAYD). A Phosphoserine modification is found at Ser-398. The segment covering 459 to 471 (SRSSPGESLGSSP) has biased composition (low complexity). Basic and acidic residues-rich tracts occupy residues 492–501 (KTDKTKPQRE) and 527–545 (EKSK…RKES).

As to expression, highly expressed in testis.

In terms of biological role, may function as a GTPase-activating protein. May play a role in transmission ratio distortion (TRD) in mouse, in which heterozygous males for t-locus transmit their t-carrying chromosome to 95% or more of their offspring. This is T-cell activation Rho GTPase-activating protein (Tagap) from Mus musculus (Mouse).